Reading from the N-terminus, the 370-residue chain is UDP-N-acetylglucosamine--N-acetylmuramyl-(pentapeptide) pyrophosphoryl-undecaprenol N-acetylglucosamine transferase (370 aa).

UDP-N-acetyl-alpha-D-glucosamine contacts are provided by residues 14-16 (TGG), Asn-125, Arg-168, Ser-196, and Gln-297.

Belongs to the glycosyltransferase 28 family. MurG subfamily.

Its subcellular location is the cell inner membrane. It catalyses the reaction di-trans,octa-cis-undecaprenyl diphospho-N-acetyl-alpha-D-muramoyl-L-alanyl-D-glutamyl-meso-2,6-diaminopimeloyl-D-alanyl-D-alanine + UDP-N-acetyl-alpha-D-glucosamine = di-trans,octa-cis-undecaprenyl diphospho-[N-acetyl-alpha-D-glucosaminyl-(1-&gt;4)]-N-acetyl-alpha-D-muramoyl-L-alanyl-D-glutamyl-meso-2,6-diaminopimeloyl-D-alanyl-D-alanine + UDP + H(+). Its pathway is cell wall biogenesis; peptidoglycan biosynthesis. Functionally, cell wall formation. Catalyzes the transfer of a GlcNAc subunit on undecaprenyl-pyrophosphoryl-MurNAc-pentapeptide (lipid intermediate I) to form undecaprenyl-pyrophosphoryl-MurNAc-(pentapeptide)GlcNAc (lipid intermediate II). The polypeptide is UDP-N-acetylglucosamine--N-acetylmuramyl-(pentapeptide) pyrophosphoryl-undecaprenol N-acetylglucosamine transferase (Nitrobacter hamburgensis (strain DSM 10229 / NCIMB 13809 / X14)).